Consider the following 115-residue polypeptide: uncharacterized protein (115 aa).

The N-terminal stretch at 1-26 (MNFKKTVVSALSISALALSVSGVASA) is a signal peptide. The 79-residue stretch at 36–114 (VKNISISPTH…AVFGKVYVTV (79 aa)) folds into the BIG2 domain.

This is an uncharacterized protein from Bacillus subtilis (strain 168).